We begin with the raw amino-acid sequence, 649 residues long: 70 kDa protein (649 aa).

Disordered regions lie at residues 28 to 80 (LRRG…DFSP), 257 to 286 (ALSL…AASD), 311 to 359 (TATS…SKQQ), and 458 to 550 (QSAE…PSSL). Over residues 268 to 279 (KSTSPCNNSQLP) the composition is skewed to polar residues. Over residues 330 to 349 (RLQRSLHLHSRSPHSSHFRP) the composition is skewed to basic residues. Positions 504-515 (DVSNSETKNCPS) are enriched in polar residues. Composition is skewed to low complexity over residues 524 to 533 (PNHLHPLLPG) and 540 to 550 (PRQLSPSPSSL).

This sequence belongs to the tymoviridae protein p69 family.

This chain is 70 kDa protein, found in Solanum lycopersicum (Tomato).